An 89-amino-acid polypeptide reads, in one-letter code: MNAVITVVGKDKVGIIHGVSGILNENNVNILNISQTIMDGYFTMIMLTDISNSTKDISSLKEIFKEFSLKNSLDISVQHEDIFNSMHRI.

The region spanning 4 to 84 is the ACT domain; it reads VITVVGKDKV…ISVQHEDIFN (81 aa).

This sequence belongs to the UPF0237 family.

This Clostridium perfringens (strain 13 / Type A) protein is UPF0237 protein CPE1496.